We begin with the raw amino-acid sequence, 441 residues long: Glutamate-1-semialdehyde 2,1-aminomutase (441 aa).

Lysine 279 bears the N6-(pyridoxal phosphate)lysine mark.

The protein belongs to the class-III pyridoxal-phosphate-dependent aminotransferase family. HemL subfamily. Homodimer. It depends on pyridoxal 5'-phosphate as a cofactor.

Its subcellular location is the cytoplasm. The catalysed reaction is (S)-4-amino-5-oxopentanoate = 5-aminolevulinate. The protein operates within porphyrin-containing compound metabolism; protoporphyrin-IX biosynthesis; 5-aminolevulinate from L-glutamyl-tRNA(Glu): step 2/2. This Leptospira borgpetersenii serovar Hardjo-bovis (strain JB197) protein is Glutamate-1-semialdehyde 2,1-aminomutase.